The sequence spans 89 residues: Exodeoxyribonuclease 7 small subunit (89 aa).

This sequence belongs to the XseB family. In terms of assembly, heterooligomer composed of large and small subunits.

The protein resides in the cytoplasm. The catalysed reaction is Exonucleolytic cleavage in either 5'- to 3'- or 3'- to 5'-direction to yield nucleoside 5'-phosphates.. Bidirectionally degrades single-stranded DNA into large acid-insoluble oligonucleotides, which are then degraded further into small acid-soluble oligonucleotides. This chain is Exodeoxyribonuclease 7 small subunit, found in Chlorobium phaeobacteroides (strain DSM 266 / SMG 266 / 2430).